A 113-amino-acid chain; its full sequence is UPF0060 membrane protein Arth_4423 (113 aa).

Transmembrane regions (helical) follow at residues 7–27 (VLLF…VWQA), 33–53 (AWWW…VATL), 62–82 (ILAA…MVFD), and 91–111 (VIGS…PRGT).

Belongs to the UPF0060 family.

Its subcellular location is the cell membrane. The chain is UPF0060 membrane protein Arth_4423 from Arthrobacter sp. (strain FB24).